An 89-amino-acid chain; its full sequence is Protein WFDC9 (89 aa).

Residues 1–23 (MKPWILLLVMFISGVVMLLPVLG) form the signal peptide.

Its subcellular location is the secreted. The polypeptide is Protein WFDC9 (WFDC9) (Homo sapiens (Human)).